The following is a 314-amino-acid chain: uncharacterized protein (314 aa).

A compositionally biased stretch (basic and acidic residues) spans 68–91; that stretch reads EKKKKSSSFEKRDKRRVQLKEKSP. Disordered regions lie at residues 68–97 and 141–164; these read EKKK…TPRN and MDVQ…RPAS. Positions 144–157 are enriched in polar residues; that stretch reads QSPSTMSTSKNNVR.

It is found in the mitochondrion. This is an uncharacterized protein from Schizosaccharomyces pombe (strain 972 / ATCC 24843) (Fission yeast).